The following is a 160-amino-acid chain: AP-1 complex subunit sigma-2 (160 aa).

The protein belongs to the adaptor complexes small subunit family. Adaptor protein complex 1 (AP-1) is a heterotetramer composed of two large adaptins (gamma-type subunit AP1G1 and beta-type subunit AP1B1), a medium adaptin (mu-type subunit AP1M1 or AP1M2) and a small adaptin (sigma-type subunit AP1S1 or AP1S2 or AP1S3). Binds to MUC1. As to expression, widely expressed.

It is found in the golgi apparatus. Its subcellular location is the cytoplasmic vesicle membrane. The protein resides in the membrane. It localises to the clathrin-coated pit. In terms of biological role, subunit of clathrin-associated adaptor protein complex 1 that plays a role in protein sorting in the late-Golgi/trans-Golgi network (TGN) and/or endosomes. The AP complexes mediate both the recruitment of clathrin to membranes and the recognition of sorting signals within the cytosolic tails of transmembrane cargo molecules. This chain is AP-1 complex subunit sigma-2 (Ap1s2), found in Mus musculus (Mouse).